We begin with the raw amino-acid sequence, 574 residues long: UvrABC system protein C (574 aa).

One can recognise a GIY-YIG domain in the interval 12–92; that stretch reads KKPGVYIFKN…IYIHKPKYNI (81 aa). In terms of domain architecture, UVR spans 200–235; that stretch reads EEVKNYLQKAMMDYAKIKNYEKAAQMRDTLFKLENL.

The protein belongs to the UvrC family. As to quaternary structure, interacts with UvrB in an incision complex.

Its subcellular location is the cytoplasm. The UvrABC repair system catalyzes the recognition and processing of DNA lesions. UvrC both incises the 5' and 3' sides of the lesion. The N-terminal half is responsible for the 3' incision and the C-terminal half is responsible for the 5' incision. The polypeptide is UvrABC system protein C (Petrotoga mobilis (strain DSM 10674 / SJ95)).